A 679-amino-acid chain; its full sequence is MSEKINTKPFILHSDFRPSGDQPQAIEKLAENLTDGLAHQTLLGVTGSGKTFTIANVIAQLNRPAMLLAPNKTLAAQLYAEMKAFFPENAVEYFVSYYDYYQPEAYVPSSDTFIEKDASINDQIEQMRLSATKSFLERRDTIVVASVSAIYGLGDPDSYLQMMLHLQQGAIIDQRQILAKLAELQYTRNDQAFQRGTFRVRGEIIDIFPAESDDRAVRIELFDDEIERLSLFDPLTGSSFGAVPRFTIYPKTHYVTPRERILDAIENIKKELVSRREYFIKEHKLLEEQRISQRTQFDIEMMNELGYCSGIENYSRYLSGRNEGEPPPTLFDYMPSDAILIIDESHVTVPQIGGMYRGDRSRKETLVEYGFRLPSALDNRPLRFEEFERLAPQTIYVSATPGPYELEKSGTEIIDQVVRPTGLLDPLIEIRPVSIQVDDLLSEARQRADKNERVLVTTLTKKMAEDLTDYLDEHGIRVRYLHSDIDTVERVEIIRDLRLGEFDVLVGINLLREGLDIPEVSLVAILDADKEGFLRSERSLIQTIGRAARNLNGKAILYADSITKSMEKAITETNRRREKQIKYNEEHGIVPQALNKKVGELLDIGQGANQKAKANKQRGKMAAEPTALYNAPKNAKEYQQQIKKLEQQMYKFAQDLEFEKAAAIRDQLHQLREQFVFDN.

The Helicase ATP-binding domain occupies Glu31–Ile414. Gly44–Thr51 serves as a coordination point for ATP. The Beta-hairpin motif lies at Tyr97–Ile120. The 154-residue stretch at Gln436 to Ile589 folds into the Helicase C-terminal domain. Positions Gln639 to Gln674 constitute a UVR domain.

The protein belongs to the UvrB family. Forms a heterotetramer with UvrA during the search for lesions. Interacts with UvrC in an incision complex.

Its subcellular location is the cytoplasm. Its function is as follows. The UvrABC repair system catalyzes the recognition and processing of DNA lesions. A damage recognition complex composed of 2 UvrA and 2 UvrB subunits scans DNA for abnormalities. Upon binding of the UvrA(2)B(2) complex to a putative damaged site, the DNA wraps around one UvrB monomer. DNA wrap is dependent on ATP binding by UvrB and probably causes local melting of the DNA helix, facilitating insertion of UvrB beta-hairpin between the DNA strands. Then UvrB probes one DNA strand for the presence of a lesion. If a lesion is found the UvrA subunits dissociate and the UvrB-DNA preincision complex is formed. This complex is subsequently bound by UvrC and the second UvrB is released. If no lesion is found, the DNA wraps around the other UvrB subunit that will check the other stand for damage. This Haemophilus influenzae (strain 86-028NP) protein is UvrABC system protein B.